Reading from the N-terminus, the 143-residue chain is ATP synthase subunit 9, mitochondrial (143 aa).

The N-terminal 62 residues, 1–62, are a transit peptide targeting the mitochondrion; it reads MAASRVFAQR…ARQAFAARRQ (62 aa). 2 helical membrane-spanning segments follow: residues 85–105 and 119–139; these read IGLGGAGIGIGVVFGSLLLAV and AILGFAFVEAIGLFDLMVAMM.

It belongs to the ATPase C chain family. In terms of assembly, F-type ATPases have 2 components, CF(1) - the catalytic core - and CF(0) - the membrane proton channel. CF(1) has five subunits: alpha(3), beta(3), gamma(1), delta(1), epsilon(1). CF(0) has three main subunits: a, b and c.

It localises to the mitochondrion membrane. Functionally, mitochondrial membrane ATP synthase (F(1)F(0) ATP synthase or Complex V) produces ATP from ADP in the presence of a proton gradient across the membrane which is generated by electron transport complexes of the respiratory chain. F-type ATPases consist of two structural domains, F(1) - containing the extramembraneous catalytic core and F(0) - containing the membrane proton channel, linked together by a central stalk and a peripheral stalk. During catalysis, ATP synthesis in the catalytic domain of F(1) is coupled via a rotary mechanism of the central stalk subunits to proton translocation. Part of the complex F(0) domain. A homomeric c-ring of probably 10 subunits is part of the complex rotary element. This is ATP synthase subunit 9, mitochondrial (atp9) from Emericella nidulans (strain FGSC A4 / ATCC 38163 / CBS 112.46 / NRRL 194 / M139) (Aspergillus nidulans).